A 360-amino-acid chain; its full sequence is DNA polymerase IV (360 aa).

One can recognise a UmuC domain in the interval 6-187; that stretch reads IIHVDMDAFY…LKIGDLHGVG (182 aa). Mg(2+) is bound by residues D10 and D105. Residue E106 is part of the active site.

The protein belongs to the DNA polymerase type-Y family. In terms of assembly, monomer. Mg(2+) is required as a cofactor.

The protein resides in the cytoplasm. The enzyme catalyses DNA(n) + a 2'-deoxyribonucleoside 5'-triphosphate = DNA(n+1) + diphosphate. Functionally, poorly processive, error-prone DNA polymerase involved in untargeted mutagenesis. Copies undamaged DNA at stalled replication forks, which arise in vivo from mismatched or misaligned primer ends. These misaligned primers can be extended by PolIV. Exhibits no 3'-5' exonuclease (proofreading) activity. May be involved in translesional synthesis, in conjunction with the beta clamp from PolIII. In Exiguobacterium sibiricum (strain DSM 17290 / CCUG 55495 / CIP 109462 / JCM 13490 / 255-15), this protein is DNA polymerase IV.